We begin with the raw amino-acid sequence, 79 residues long: Ubiquinol-cytochrome c reductase complex assembly factor 5 (79 aa).

Residues M1–R20 are Mitochondrial matrix-facing. Residues F21–N43 traverse the membrane as a helical segment. Topologically, residues W44 to N79 are mitochondrial intermembrane.

This sequence belongs to the UQCC5 family. As to quaternary structure, interacts with respiratory complex III components Uqcc1 and RFeSP; the interactions are probably involved in the assembly and stability of the mitochondrial ubiquinol-cytochrome c reductase complex. Interacts with sloth2; the interaction stabilizes both components. As to expression, expressed in the brain.

Its subcellular location is the mitochondrion inner membrane. It is found in the mitochondrion. In terms of biological role, required for the assembly and stability of the mitochondrial ubiquinol-cytochrome c reductase complex (complex III (CIII) or cytochrome b-c1 complex), a multisubunit transmembrane complex that is part of the mitochondrial electron transport chain (ETC) which drives oxidative phosphorylation. This Drosophila melanogaster (Fruit fly) protein is Ubiquinol-cytochrome c reductase complex assembly factor 5.